A 230-amino-acid chain; its full sequence is Ribonuclease 3 (230 aa).

Residues 5-125 (YSRFYNILGY…VIGAIYLDSD (121 aa)) enclose the RNase III domain. Glutamate 40 provides a ligand contact to Mg(2+). Aspartate 44 is a catalytic residue. Residues aspartate 111 and glutamate 114 each contribute to the Mg(2+) site. Glutamate 114 is an active-site residue. The DRBM domain maps to 153-223 (DSKSKLQEIL…AEKMIEMLSQ (71 aa)).

It belongs to the ribonuclease III family. Homodimer. Requires Mg(2+) as cofactor.

Its subcellular location is the cytoplasm. The catalysed reaction is Endonucleolytic cleavage to 5'-phosphomonoester.. Digests double-stranded RNA. Involved in the processing of primary rRNA transcript to yield the immediate precursors to the large and small rRNAs (23S and 16S). Processes some mRNAs, and tRNAs when they are encoded in the rRNA operon. Processes pre-crRNA and tracrRNA of type II CRISPR loci if present in the organism. The sequence is that of Ribonuclease 3 from Francisella tularensis subsp. tularensis (strain WY96-3418).